Reading from the N-terminus, the 418-residue chain is Aminodeoxyfutalosine deaminase (418 aa).

Zn(2+) is bound by residues His-97 and His-99. Substrate is bound by residues Glu-173 and His-211. His-238 provides a ligand contact to Zn(2+). Glu-241 serves as the catalytic Proton donor. Asp-352 serves as a coordination point for Zn(2+).

It belongs to the metallo-dependent hydrolases superfamily. Requires Zn(2+) as cofactor.

It catalyses the reaction 6-amino-6-deoxyfutalosine + H2O + H(+) = futalosine + NH4(+). Its pathway is quinol/quinone metabolism; menaquinone biosynthesis. Catalyzes the deamination of aminodeoxyfutalosine (AFL) into futalosine (FL). To a lesser extent, can also deaminate 5'-deoxyadenosine, 5'-methylthioadenosine, 2'-deoxyadenosine, adenosine, 1-(6-amino-9H-purin-9-yl)-1-deoxy-N-ethyl-beta-D-ribofuranuronamide (NECA), and S-adenosylhomocysteine. The polypeptide is Aminodeoxyfutalosine deaminase (Deinococcus radiodurans (strain ATCC 13939 / DSM 20539 / JCM 16871 / CCUG 27074 / LMG 4051 / NBRC 15346 / NCIMB 9279 / VKM B-1422 / R1)).